Here is a 158-residue protein sequence, read N- to C-terminus: Cyclic pyranopterin monophosphate synthase (158 aa).

Residues 75 to 77 (LCH) and 113 to 114 (ME) each bind substrate. Residue Asp-128 is part of the active site.

Belongs to the MoaC family. As to quaternary structure, homohexamer; trimer of dimers.

The enzyme catalyses (8S)-3',8-cyclo-7,8-dihydroguanosine 5'-triphosphate = cyclic pyranopterin phosphate + diphosphate. It functions in the pathway cofactor biosynthesis; molybdopterin biosynthesis. In terms of biological role, catalyzes the conversion of (8S)-3',8-cyclo-7,8-dihydroguanosine 5'-triphosphate to cyclic pyranopterin monophosphate (cPMP). In Paraburkholderia phytofirmans (strain DSM 17436 / LMG 22146 / PsJN) (Burkholderia phytofirmans), this protein is Cyclic pyranopterin monophosphate synthase.